The sequence spans 222 residues: 3-demethoxyubiquinol 3-hydroxylase (222 aa).

Residues Glu71, Glu101, His104, Glu153, Glu185, and His188 each contribute to the Fe cation site.

Belongs to the COQ7 family. Fe cation serves as cofactor.

It is found in the cell membrane. The catalysed reaction is a 5-methoxy-2-methyl-3-(all-trans-polyprenyl)benzene-1,4-diol + AH2 + O2 = a 3-demethylubiquinol + A + H2O. It functions in the pathway cofactor biosynthesis; ubiquinone biosynthesis. Its function is as follows. Catalyzes the hydroxylation of 2-nonaprenyl-3-methyl-6-methoxy-1,4-benzoquinol during ubiquinone biosynthesis. This chain is 3-demethoxyubiquinol 3-hydroxylase, found in Bordetella bronchiseptica (strain ATCC BAA-588 / NCTC 13252 / RB50) (Alcaligenes bronchisepticus).